Here is a 209-residue protein sequence, read N- to C-terminus: Dual specificity phosphatase 29 (209 aa).

One can recognise a Tyrosine-protein phosphatase domain in the interval 44-193 (NHVNEVWPNL…LRELDIQLAL (150 aa)). A substrate-binding site is contributed by 137-144 (NCAMGRSR). The active-site Phosphocysteine intermediate is Cys138.

It belongs to the protein-tyrosine phosphatase family. Non-receptor class dual specificity subfamily.

The protein resides in the cytoplasm. It localises to the nucleus. The catalysed reaction is O-phospho-L-tyrosyl-[protein] + H2O = L-tyrosyl-[protein] + phosphate. The enzyme catalyses O-phospho-L-seryl-[protein] + H2O = L-seryl-[protein] + phosphate. It catalyses the reaction O-phospho-L-threonyl-[protein] + H2O = L-threonyl-[protein] + phosphate. Dual specificity phosphatase able to dephosphorylate phosphotyrosine, phosphoserine and phosphothreonine residues within the same substrate, with a preference for phosphotyrosine as a substrate. Involved in the modulation of AMPK and MAPK1/2 signaling pathways. The polypeptide is Dual specificity phosphatase 29 (dusp29) (Xenopus tropicalis (Western clawed frog)).